Here is a 531-residue protein sequence, read N- to C-terminus: Flavin-containing monooxygenase 3 (531 aa).

FAD is bound by residues 9-13 (GAGVS), glutamate 32, 40-41 (LW), and 61-62 (NS). Residues 60-61 (TN) and 195-198 (SGCD) contribute to the NADP(+) site. Serine 401 is subject to Phosphoserine. A helical membrane pass occupies residues 511 to 531 (YSHFLRLLAVPVLIALFLVLI).

Belongs to the FMO family. FAD is required as a cofactor. Detected in liver and kidney (at protein level). Expressed in kidney and liver. Weakly expressed in lung. Does not seem to be expressed in brain, adipose tissue, or muscle.

Its subcellular location is the microsome membrane. It localises to the endoplasmic reticulum membrane. The enzyme catalyses trimethylamine + NADPH + O2 = trimethylamine N-oxide + NADP(+) + H2O. The catalysed reaction is N,N-dimethylaniline + NADPH + O2 + H(+) = N,N-dimethylaniline N-oxide + NADP(+) + H2O. It catalyses the reaction hypotaurine + NADPH + O2 + H(+) = taurine + NADP(+) + H2O. It carries out the reaction (S)-nicotine + NADPH + O2 = trans-(S)-nicotine N(1')-oxide + NADP(+) + H2O. The enzyme catalyses albendazole + NADPH + O2 + H(+) = albendazole S-oxide + NADP(+) + H2O. In terms of biological role, essential hepatic enzyme that catalyzes the oxygenation of a wide variety of nitrogen- and sulfur-containing compounds including drugs as well as dietary compounds. Plays an important role in the metabolism of trimethylamine (TMA), via the production of trimethylamine N-oxide (TMAO) metabolite. TMA is generated by the action of gut microbiota using dietary precursors such as choline, choline containing compounds, betaine or L-carnitine. By regulating TMAO concentration, FMO3 directly impacts both platelet responsiveness and rate of thrombus formation. This is Flavin-containing monooxygenase 3 (Fmo3) from Rattus norvegicus (Rat).